Consider the following 692-residue polypeptide: UvrABC system protein B (692 aa).

Residues 32-187 (ENIENGEKAQ…LLNDLVGIQF (156 aa)) form the Helicase ATP-binding domain. ATP is bound at residue 45–52 (GATGTGKT). A Beta-hairpin motif is present at residues 98 to 121 (YYDYYQPEAYVPSSDTYIEKDSSV). Positions 436–631 (QIDDLVGEIH…TIKKEIRDLI (196 aa)) constitute a Helicase C-terminal domain. Residues 656–691 (KALVKKLEKEMQQAAAALDFEGAAQLRDMVLELRAM) form the UVR domain.

Belongs to the UvrB family. In terms of assembly, forms a heterotetramer with UvrA during the search for lesions. Interacts with UvrC in an incision complex.

It localises to the cytoplasm. Functionally, the UvrABC repair system catalyzes the recognition and processing of DNA lesions. A damage recognition complex composed of 2 UvrA and 2 UvrB subunits scans DNA for abnormalities. Upon binding of the UvrA(2)B(2) complex to a putative damaged site, the DNA wraps around one UvrB monomer. DNA wrap is dependent on ATP binding by UvrB and probably causes local melting of the DNA helix, facilitating insertion of UvrB beta-hairpin between the DNA strands. Then UvrB probes one DNA strand for the presence of a lesion. If a lesion is found the UvrA subunits dissociate and the UvrB-DNA preincision complex is formed. This complex is subsequently bound by UvrC and the second UvrB is released. If no lesion is found, the DNA wraps around the other UvrB subunit that will check the other stand for damage. The protein is UvrABC system protein B of Lactococcus lactis subsp. cremoris (strain SK11).